The sequence spans 162 residues: Disulfide bond formation protein B (162 aa).

The Cytoplasmic segment spans residues 1–8 (MTPLFRKA). The helical transmembrane segment at 9 to 25 (VWLLFAVSVCAFAGSLA) threads the bilayer. The Periplasmic segment spans residues 26–43 (AQYVLGMEPCVLCISQRL). A disulfide bridge links Cys35 with Cys38. A helical membrane pass occupies residues 44-60 (CVLATALCTAIVLMCRP). At 61–67 (RRRAGGL) the chain is on the cytoplasmic side. A helical membrane pass occupies residues 68–85 (FGAVFISIPAVTGISVAA). The Periplasmic segment spans residues 86–141 (YQLWLQSLPPGTAPSCGAPWTFRLKGWSLFDWFEPVVRGFGNCAEPDYLLGVALPV). Cys101 and Cys128 are oxidised to a cystine. A helical transmembrane segment spans residues 142–160 (WSAAYFLAVVLTVWWAWAR). Over 161–162 (AK) the chain is Cytoplasmic.

The protein belongs to the DsbB family.

The protein localises to the cell inner membrane. Its function is as follows. Required for disulfide bond formation in some periplasmic proteins. Acts by oxidizing the DsbA protein. This is Disulfide bond formation protein B from Neisseria meningitidis serogroup C / serotype 2a (strain ATCC 700532 / DSM 15464 / FAM18).